The primary structure comprises 333 residues: Ornithine carbamoyltransferase (333 aa).

Carbamoyl phosphate-binding positions include Ser56 to Thr59, Arg107, and His134 to Gln137. Residues Asn167, Asp231, and Ser235–Met236 each bind L-ornithine. Carbamoyl phosphate is bound by residues Cys273–Leu274 and Arg318.

This sequence belongs to the aspartate/ornithine carbamoyltransferase superfamily. OTCase family.

Its subcellular location is the cytoplasm. The catalysed reaction is carbamoyl phosphate + L-ornithine = L-citrulline + phosphate + H(+). It participates in amino-acid degradation; L-arginine degradation via ADI pathway; carbamoyl phosphate from L-arginine: step 2/2. Its function is as follows. Reversibly catalyzes the transfer of the carbamoyl group from carbamoyl phosphate (CP) to the N(epsilon) atom of ornithine (ORN) to produce L-citrulline. This is Ornithine carbamoyltransferase from Clostridium botulinum (strain ATCC 19397 / Type A).